Consider the following 230-residue polypeptide: Protein tumorous testis (230 aa).

In terms of domain architecture, RRM spans 37–128 (GELFLSCIPR…RELVLKNVES (92 aa)).

Part of a complex composed of at least tut, bam and bgcn; complex formation does not require RNA. Interacts with bam (via N-terminus); the interaction is direct. Interacts with bgcn; the interaction is indirect and is mediated by bam. As part of the bam-bgcn-tut complex associates with twin; may recruit the CCR4-NOT1 deadenylation complex to mRNA 3'UTRs to mediate post-transcriptional regulation of expression.

Its subcellular location is the cytoplasm. In terms of biological role, RNA binding protein that forms a complex with bam and bgcn, involved in 3'UTR-dependent regulation of a subset of mRNAs. Preferentially binds a long isoform of mei-P26 transcripts. Involved in 3'UTR-dependent post-transcriptional repression of several 3'-RNA processing factors. Involved in promoting germline stem cell lineage differentiation and mitosis-to-meiosis transition. Required for proper transit amplification of spermatogonia. This Drosophila melanogaster (Fruit fly) protein is Protein tumorous testis.